Reading from the N-terminus, the 185-residue chain is Ribosome-recycling factor (185 aa).

Residues isoleucine 139–lysine 159 form a disordered region. Residues serine 141–lysine 159 show a composition bias toward basic and acidic residues.

The protein belongs to the RRF family.

It is found in the cytoplasm. In terms of biological role, responsible for the release of ribosomes from messenger RNA at the termination of protein biosynthesis. May increase the efficiency of translation by recycling ribosomes from one round of translation to another. The polypeptide is Ribosome-recycling factor (Sorangium cellulosum (strain So ce56) (Polyangium cellulosum (strain So ce56))).